A 160-amino-acid chain; its full sequence is Prorelaxin (160 aa).

3 cysteine pairs are disulfide-bonded: Cys10–Cys147, Cys22–Cys160, and Cys146–Cys151. Residues 34 to 133 (QEKQRILGSG…KDFNLNIYSP (100 aa)) constitute a propeptide, connecting peptide.

The protein belongs to the insulin family. In terms of assembly, heterodimer of a B chain and an A chain linked by two disulfide bonds. As to expression, expressed in the endometrium during pregnancy and in mammary gland during lactation.

The protein resides in the secreted. In terms of biological role, relaxin is an ovarian hormone that acts with estrogen to produce dilatation of the birth canal in many mammals. It bears mature young, and allows separation of the pelvic bones. The protein is Prorelaxin (RLN) of Cavia porcellus (Guinea pig).